The sequence spans 431 residues: Sulfide dehydrogenase [flavocytochrome c] flavoprotein chain (431 aa).

The segment at residues 1 to 30 is a signal peptide (tat-type signal); sequence MTLNRRDFIKTSGAAVAAVGILGFPHLAFG. Residue 70–76 participates in FAD binding; the sequence is YTCYLSN. C191 and C367 form a disulfide bridge.

In terms of assembly, dimer of one cytochrome and one flavoprotein. In terms of processing, predicted to be exported by the Tat system. The position of the signal peptide cleavage has been experimentally proven.

The protein resides in the periplasm. The catalysed reaction is hydrogen sulfide + 2 Fe(III)-[cytochrome c] = sulfur + 2 Fe(II)-[cytochrome c] + H(+). The polypeptide is Sulfide dehydrogenase [flavocytochrome c] flavoprotein chain (fccB) (Allochromatium vinosum (strain ATCC 17899 / DSM 180 / NBRC 103801 / NCIMB 10441 / D) (Chromatium vinosum)).